Consider the following 551-residue polypeptide: Ubiquitin carboxyl-terminal hydrolase 24 (551 aa).

Disordered regions lie at residues 51 to 104 (NSSV…SLRV) and 163 to 188 (NEDFSSDSSSGSIQRKKNLKVPTESV). A USP domain is found at 197–551 (RGLINAGNLC…QAYVLFYKQV (355 aa)). The Nucleophile role is filled by Cys206. Over residues 329-338 (SKSSVISSAN) the composition is skewed to polar residues. The interval 329–349 (SKSSVISSANDDGDEWETVGP) is disordered. The active-site Proton acceptor is His510.

This sequence belongs to the peptidase C19 family.

The catalysed reaction is Thiol-dependent hydrolysis of ester, thioester, amide, peptide and isopeptide bonds formed by the C-terminal Gly of ubiquitin (a 76-residue protein attached to proteins as an intracellular targeting signal).. In terms of biological role, recognizes and hydrolyzes the peptide bond at the C-terminal Gly of ubiquitin. Involved in the processing of poly-ubiquitin precursors as well as that of ubiquitinated proteins. In Arabidopsis thaliana (Mouse-ear cress), this protein is Ubiquitin carboxyl-terminal hydrolase 24 (UBP24).